The primary structure comprises 199 residues: V-type proton ATPase subunit E (199 aa).

It belongs to the V-ATPase E subunit family.

Its function is as follows. Produces ATP from ADP in the presence of a proton gradient across the membrane. This chain is V-type proton ATPase subunit E, found in Clostridium botulinum (strain Loch Maree / Type A3).